We begin with the raw amino-acid sequence, 266 residues long: Type III pantothenate kinase (266 aa).

ATP is bound at residue 6–13 (DVGNSHTV). 112–115 (GIDR) is a binding site for substrate. The active-site Proton acceptor is Asp114. A K(+)-binding site is contributed by Asp134. ATP is bound at residue Thr137. Thr190 provides a ligand contact to substrate.

It belongs to the type III pantothenate kinase family. As to quaternary structure, homodimer. NH4(+) serves as cofactor. K(+) is required as a cofactor.

Its subcellular location is the cytoplasm. It catalyses the reaction (R)-pantothenate + ATP = (R)-4'-phosphopantothenate + ADP + H(+). It functions in the pathway cofactor biosynthesis; coenzyme A biosynthesis; CoA from (R)-pantothenate: step 1/5. Functionally, catalyzes the phosphorylation of pantothenate (Pan), the first step in CoA biosynthesis. In Desulfotalea psychrophila (strain LSv54 / DSM 12343), this protein is Type III pantothenate kinase.